Consider the following 491-residue polypeptide: Probable glycine dehydrogenase (decarboxylating) subunit 2 (491 aa).

At Lys274 the chain carries N6-(pyridoxal phosphate)lysine.

The protein belongs to the GcvP family. C-terminal subunit subfamily. In terms of assembly, the glycine cleavage system is composed of four proteins: P, T, L and H. In this organism, the P 'protein' is a heterodimer of two subunits. It depends on pyridoxal 5'-phosphate as a cofactor.

The catalysed reaction is N(6)-[(R)-lipoyl]-L-lysyl-[glycine-cleavage complex H protein] + glycine + H(+) = N(6)-[(R)-S(8)-aminomethyldihydrolipoyl]-L-lysyl-[glycine-cleavage complex H protein] + CO2. In terms of biological role, the glycine cleavage system catalyzes the degradation of glycine. The P protein binds the alpha-amino group of glycine through its pyridoxal phosphate cofactor; CO(2) is released and the remaining methylamine moiety is then transferred to the lipoamide cofactor of the H protein. This Shouchella clausii (strain KSM-K16) (Alkalihalobacillus clausii) protein is Probable glycine dehydrogenase (decarboxylating) subunit 2.